A 295-amino-acid chain; its full sequence is Shikimate dehydrogenase (NADP(+)) (295 aa).

Residues 22–24 and S69 contribute to the shikimate site; that span reads SLS. K73 functions as the Proton acceptor in the catalytic mechanism. Residues N94 and D111 each contribute to the shikimate site. NADP(+) contacts are provided by residues 135-139 and V236; that span reads GAGGA. Y238 contributes to the shikimate binding site. G260 contacts NADP(+).

Belongs to the shikimate dehydrogenase family. Homodimer.

It carries out the reaction shikimate + NADP(+) = 3-dehydroshikimate + NADPH + H(+). It functions in the pathway metabolic intermediate biosynthesis; chorismate biosynthesis; chorismate from D-erythrose 4-phosphate and phosphoenolpyruvate: step 4/7. In terms of biological role, involved in the biosynthesis of the chorismate, which leads to the biosynthesis of aromatic amino acids. Catalyzes the reversible NADPH linked reduction of 3-dehydroshikimate (DHSA) to yield shikimate (SA). This Streptococcus uberis (strain ATCC BAA-854 / 0140J) protein is Shikimate dehydrogenase (NADP(+)).